The sequence spans 454 residues: Asparagine--tRNA ligase (454 aa).

It belongs to the class-II aminoacyl-tRNA synthetase family. Homodimer.

It localises to the cytoplasm. It catalyses the reaction tRNA(Asn) + L-asparagine + ATP = L-asparaginyl-tRNA(Asn) + AMP + diphosphate + H(+). This Ureaplasma parvum serovar 3 (strain ATCC 27815 / 27 / NCTC 11736) protein is Asparagine--tRNA ligase.